Consider the following 811-residue polypeptide: TLR4 interactor with leucine rich repeats (811 aa).

The N-terminal stretch at 1–25 is a signal peptide; it reads MEAARALRLLLVVCGCLALPPLAEP. In terms of domain architecture, LRRNT spans 26 to 57; sequence VCPERCDCQHPQHLLCTNRGLRVVPKTSSLPS. Residues 26–696 lie on the Extracellular side of the membrane; the sequence is VCPERCDCQH…AGSRGGVDYQ (671 aa). LRR repeat units follow at residues 61-81, 84-105, 108-129, 132-153, 156-177, 180-201, 204-223, 230-251, 254-275, 278-299, 302-323, and 326-347; these read VLTYSLGGNFITNITAFDFHR, QLRRLDLQYNQIRSLHPKTFEK, RLEELYLGNNLLQALAPGTLAP, KLRILYANGNEISRLSRGSFEG, SLVKLRLDGNALGALPDAVFAP, NLLYLHLESNRIRFLGKNAFAQ, KLRFLNLSANELQPSLRHAA, SLSSLILSANNLQHLGPRIFQH, RLGLLSLRGNQLTHLAPEAFWG, ALRELRLEGNRLSQLPTALLEP, SLEALDLSGNELSALHPATFGH, and RLRELSLRNNALSALSGDIFAA. Asn73 is a glycosylation site (N-linked (GlcNAc...) asparagine). N-linked (GlcNAc...) asparagine glycosylation occurs at Asn209. Positions 359–416 constitute an LRRCT domain; that stretch reads NGWTCDCRLRGLKRWMGDWHSQGRLLTVFVQCRHPPALRGKYLDYLDDQQLQNGSCAD. Positions 484-549 are disordered; it reads LSRRGPGLQQ…PSPAGDPWQR (66 aa). Low complexity-rich tracts occupy residues 492 to 508 and 530 to 544; these read QQPSPSVAAAAGPAPQS and PTPTASPGSAPSPAG. N-linked (GlcNAc...) asparagine glycosylation occurs at Asn589. Residues 697–717 form a helical membrane-spanning segment; it reads LLTLALLTVNALLVLLALAAW. At 718-811 the chain is on the cytoplasmic side; that stretch reads ASRWLRRKLR…EDRLLQRFAD (94 aa). Residue Ser798 is modified to Phosphoserine.

In terms of assembly, belongs to the lipopolysaccharide (LPS) receptor, a multi-protein complex containing at least CD14, MD-2 and TLR4. Interacts with TLR4; this interaction is greatly enhanced by LPS stimulation. Interacts with LPS. In terms of processing, N-glycolysaled. Highly expressed in the brain, ovary, small intestine and spleen.

The protein localises to the membrane. Component of the TLR4 signaling complex. Mediates the innate immune response to bacterial lipopolysaccharide (LPS) leading to cytokine secretion. The chain is TLR4 interactor with leucine rich repeats (TRIL) from Homo sapiens (Human).